We begin with the raw amino-acid sequence, 337 residues long: ELAV-like protein 1-A (337 aa).

RRM domains follow at residues 20–109, 117–197, and 255–333; these read TNLI…FARP, ANLY…FAAN, and WCIF…FKTS.

This sequence belongs to the RRM elav family. In terms of assembly, interacts (via RRM3) with cirbp. Unable to form oligomers. Part of a ribonucleoprotein (RNP) complex, at least composed of elavl1/elrA and/or elavl2/elrB, igf2bp3/vg1RBP, ddx6/Xp54, ybx2/frgy2, lsm14b/rap55b and, in a subset of RNP complexes, stau1/staufen. In terms of tissue distribution, ubiquitously expressed in adults.

Its subcellular location is the cytoplasm. It is found in the cell cortex. Its function is as follows. RNA-binding protein that binds to the 3'-UTR region of mRNAs and increases their stability. Involved in embryonic stem cells (ESCs) differentiation: preferentially binds mRNAs that are not methylated by N6-methyladenosine (m6A), stabilizing them, promoting ESCs differentiation. Binds to poly-U elements and AU-rich elements (AREs) in the 3'-UTR of target mRNAs. May be involved in cytoplasmic mRNA polyadenylation. Acts cooperatively with cribp to stabilize AU-rich sequence (ARE)-containing mRNAs. May play a role during gastrulation. Required for the vegetal localization of vg1 mRNA. This Xenopus laevis (African clawed frog) protein is ELAV-like protein 1-A (elavl1-a).